The primary structure comprises 337 residues: Phosphoribosylformylglycinamidine cyclo-ligase (337 aa).

Belongs to the AIR synthase family.

It localises to the cytoplasm. The catalysed reaction is 2-formamido-N(1)-(5-O-phospho-beta-D-ribosyl)acetamidine + ATP = 5-amino-1-(5-phospho-beta-D-ribosyl)imidazole + ADP + phosphate + H(+). It participates in purine metabolism; IMP biosynthesis via de novo pathway; 5-amino-1-(5-phospho-D-ribosyl)imidazole from N(2)-formyl-N(1)-(5-phospho-D-ribosyl)glycinamide: step 2/2. The protein is Phosphoribosylformylglycinamidine cyclo-ligase of Gloeobacter violaceus (strain ATCC 29082 / PCC 7421).